The chain runs to 165 residues: DELTA-actitoxin-Oor1a (165 aa).

The segment at 1 to 17 (ATFRVLAKVLAELGKVS) is N-terminal region. The phosphocholine site is built by Ser-41, Val-74, Ser-92, Pro-94, and Tyr-125. Positions 92–107 (SVPYDYNLYSNWWNVK) are trp-rich region, which is important for the binding to lipid membrane.

It belongs to the actinoporin family. Sea anemone subfamily. Octamer or nonamer in membranes. Monomer in the soluble state.

It localises to the secreted. It is found in the nematocyst. Its subcellular location is the target cell membrane. In terms of biological role, pore-forming protein that forms cations-selective hydrophilic pores of around 1 nm and causes cardiac stimulation and cytolysis. Pore formation is a multi-step process that involves specific recognition of membrane sphingomyelin (but neither cholesterol nor phosphatidylcholine) using aromatic rich region and adjacent phosphocholine (POC) binding site, firm binding to the membrane (mainly driven by hydrophobic interactions) accompanied by the transfer of the N-terminal region to the lipid-water interface and finally pore formation after oligomerization of monomers. Cytolytic effects include red blood cells hemolysis, platelet aggregation and lysis, cytotoxic and cytostatic effects on fibroblasts. Lethality in mammals has been ascribed to severe vasospasm of coronary vessels, cardiac arrhythmia, and inotropic effects. The sequence is that of DELTA-actitoxin-Oor1a from Oulactis orientalis (Japan anemone).